The following is an 867-amino-acid chain: Cation/H(+) antiporter 23, chloroplastic (867 aa).

Helical transmembrane passes span 43 to 63 (SGST…VANL), 75 to 95 (LYLP…PSVL), 112 to 132 (MVLE…LGLG), 146 to 166 (VIIA…LYYL), 175 to 195 (IISG…PDLA), 212 to 232 (AMCA…FGFA), 242 to 262 (KMMP…IFVI), 283 to 303 (HVWF…ACGV), 336 to 356 (GILM…GFML), 362 to 382 (FMMV…TVIT), 393 to 413 (AFAI…VLNA), and 427 to 447 (HMTI…AFAY). The segment at 848–867 (SMYEDEDEDDEEDHQYGIHR) is disordered. The segment covering 851–860 (EDEDEDDEED) has biased composition (acidic residues).

It belongs to the monovalent cation:proton antiporter 2 (CPA2) transporter (TC 2.A.37) family. CHX (TC 2.A.37.4) subfamily. As to expression, specifically expressed in flower buds and pollen. Expressed in leaves, roots and stems.

The protein localises to the plastid. It is found in the chloroplast membrane. The protein resides in the endoplasmic reticulum membrane. In terms of biological role, operates as a K(+)/H(+) antiporter or Na(+)/H(+) antiporter of the chloroplast envelope that functions in pH homeostasis and chloroplast development. Monovalent cation transporter with a preference for Cs(+), K(+) and Rb(+) relative to Na(+) or Li(+). Required for pollen tube guidance, but not for normal pollen development. May also be involved in the development or function of the female gametophyte. This Arabidopsis thaliana (Mouse-ear cress) protein is Cation/H(+) antiporter 23, chloroplastic (CHX23).